Reading from the N-terminus, the 644-residue chain is Translation factor GUF1, mitochondrial (644 aa).

The N-terminal 14 residues, 1-14, are a transit peptide targeting the mitochondrion; that stretch reads MLRKAFRYLVPVRC. The 182-residue stretch at 46–227 folds into the tr-type G domain; sequence ERYRNFSIVA…AIVDRIPPPT (182 aa). GTP is bound by residues 55–62, 120–124, and 174–177; these read AHVDHGKS, DTPGH, and NKID.

The protein belongs to the TRAFAC class translation factor GTPase superfamily. Classic translation factor GTPase family. LepA subfamily.

It is found in the mitochondrion inner membrane. The catalysed reaction is GTP + H2O = GDP + phosphate + H(+). Promotes mitochondrial protein synthesis. May act as a fidelity factor of the translation reaction, by catalyzing a one-codon backward translocation of tRNAs on improperly translocated ribosomes. Binds to mitochondrial ribosomes in a GTP-dependent manner. The protein is Translation factor GUF1, mitochondrial of Eremothecium gossypii (strain ATCC 10895 / CBS 109.51 / FGSC 9923 / NRRL Y-1056) (Yeast).